A 433-amino-acid polypeptide reads, in one-letter code: Protein translocase subunit SecD (433 aa).

Transmembrane regions (helical) follow at residues Leu7 to Ile27, Leu257 to Met277, Ala278 to Ala298, Leu300 to Val320, Thr354 to Gly374, and Gly380 to Ala400.

It belongs to the SecD/SecF family. SecD subfamily. In terms of assembly, forms a complex with SecF. Part of the essential Sec protein translocation apparatus which comprises SecA, SecYEG and auxiliary proteins SecDF. Other proteins may also be involved.

It localises to the cell membrane. In terms of biological role, part of the Sec protein translocase complex. Interacts with the SecYEG preprotein conducting channel. SecDF uses the proton motive force (PMF) to complete protein translocation after the ATP-dependent function of SecA. In Alicyclobacillus acidocaldarius subsp. acidocaldarius (strain ATCC 27009 / DSM 446 / BCRC 14685 / JCM 5260 / KCTC 1825 / NBRC 15652 / NCIMB 11725 / NRRL B-14509 / 104-IA) (Bacillus acidocaldarius), this protein is Protein translocase subunit SecD.